Consider the following 361-residue polypeptide: Zinc transporter ZIP13 (361 aa).

At 1–6 (MPGCPC) the chain is on the lumenal side. A helical membrane pass occupies residues 7-27 (PGCGMAGQRLLFLTVLALELL). Residues 28-68 (ERAGGSQPALRSLGAAAACRLDNKESESWGALLSGERLDTW) lie on the Cytoplasmic side of the membrane. A helical membrane pass occupies residues 69-89 (ICSLLGSLMVGLSGVFPLLVI). Residues 90–108 (PLEMGTLLQSEAGAWRLRQ) lie on the Lumenal side of the membrane. The helical transmembrane segment at 109–129 (LLSFALGGLLGNVFLHLLPEA) threads the bilayer. Topologically, residues 130–150 (WAYTCNITPGGEGQSLQRQQQ) are cytoplasmic. A helical transmembrane segment spans residues 151–171 (LGLWVIAGFLTFLALEKMFLN). Over 172-232 (SKEDPSQAPS…TIDNFTHGLA (61 aa)) the chain is Lumenal. Residues 233-253 (VAASFLVSKKIGLLTTMAILL) traverse the membrane as a helical segment. The XEXPHE-motif signature appears at 254–259 (HEIPHE). Topologically, residues 254–275 (HEIPHEVGDFAILLRAGFDRWT) are cytoplasmic. The chain crosses the membrane as a helical span at residues 276-296 (AAKLQFSTALGGLLGACFAIC). Residues 297-306 (TQSPKGVEET) lie on the Lumenal side of the membrane. A helical transmembrane segment spans residues 307–327 (VVWILPFTSGGFLYIALVNVL). At 328-339 (PDLLEEDDPWHS) the chain is on the cytoplasmic side. The helical transmembrane segment at 340-360 (LQQVLLLCSGVLVMVLLSLFV) threads the bilayer. Position 361 (E361) is a topological domain, lumenal.

It belongs to the ZIP transporter (TC 2.A.5) family. In terms of assembly, homodimer. Highly expressed in some tissues such as bone and eye. Expressed in osteoblasts of tibia and of alveolar bone, in proliferative zone of growth plate, and in odontoblasts on the forming of the dentine of crown in molar tooth. Also expressed fibroblasts in reticular layer of dermis of skin.

It localises to the golgi apparatus membrane. It is found in the cytoplasmic vesicle membrane. Its subcellular location is the endoplasmic reticulum membrane. The catalysed reaction is Zn(2+)(in) = Zn(2+)(out). Functionally, functions as a zinc transporter transporting Zn(2+) from the Golgi apparatus to the cytosol and thus influences the zinc level at least in areas of the cytosol. May regulate beige adipocyte differentiation. This chain is Zinc transporter ZIP13, found in Mus musculus (Mouse).